Here is a 668-residue protein sequence, read N- to C-terminus: Neurexin-3-beta (668 aa).

The first 35 residues, 1-35 (MHLRTNPSICPGRRPAWTLWMCSLFWGCIVSSVWS), serve as a signal peptide directing secretion. The Extracellular segment spans residues 36–593 (SSNVASSASS…EVVRESSSTT (558 aa)). Positions 84-284 (ATYIFGKSGG…NPNIKINGSV (201 aa)) constitute a Laminin G-like domain. Residues 510–529 (TASSSTGMVPKLPAGKMNNR) are disordered. A helical membrane pass occupies residues 594–614 (GMVVGIVAAAALCILILLYAM). Over 615-668 (YKYRNRDEGSYQVDETRNYISNSAQSNGTLMKEKQQSSKSGHKKQKNKDKEYYV) the chain is Cytoplasmic. The tract at residues 636-668 (NSAQSNGTLMKEKQQSSKSGHKKQKNKDKEYYV) is disordered.

This sequence belongs to the neurexin family. In terms of processing, processed by alpha-secretase leading to the formation of an extracellular soluble protein as well as a C-terminal membrane-embedded fragment (CTF). Proteolysis of these CTFs by gamma-secretase releases intracellular domains (ICDs) and extracellular peptides. In terms of tissue distribution, brain and arteries (at protein level).

The protein resides in the membrane. Functionally, neuronal cell surface protein that may be involved in cell recognition and cell adhesion. Plays a role in angiogenesis. This chain is Neurexin-3-beta (NRXN3), found in Gallus gallus (Chicken).